The chain runs to 529 residues: Apolipoprotein N-acyltransferase (529 aa).

5 helical membrane-spanning segments follow: residues 8–28 (VMLA…AVGA), 66–86 (ILPA…AGLW), 105–125 (LAIL…VAAA), 178–198 (LLGL…PALI), and 203–223 (GMGP…GYGF). Positions 242–491 (VQPAIDQSRK…VGILDATLSG (250 aa)) constitute a CN hydrolase domain. Glu-286 serves as the catalytic Proton acceptor. Lys-350 is a catalytic residue. The active-site Nucleophile is the Cys-403. The helical transmembrane segment at 505–525 (YFWLIFSILMIVAVFPALSFA) threads the bilayer.

It belongs to the CN hydrolase family. Apolipoprotein N-acyltransferase subfamily.

The protein localises to the cell inner membrane. The catalysed reaction is N-terminal S-1,2-diacyl-sn-glyceryl-L-cysteinyl-[lipoprotein] + a glycerophospholipid = N-acyl-S-1,2-diacyl-sn-glyceryl-L-cysteinyl-[lipoprotein] + a 2-acyl-sn-glycero-3-phospholipid + H(+). It participates in protein modification; lipoprotein biosynthesis (N-acyl transfer). Functionally, catalyzes the phospholipid dependent N-acylation of the N-terminal cysteine of apolipoprotein, the last step in lipoprotein maturation. The protein is Apolipoprotein N-acyltransferase of Agrobacterium fabrum (strain C58 / ATCC 33970) (Agrobacterium tumefaciens (strain C58)).